A 256-amino-acid chain; its full sequence is Small ribosomal subunit protein eS1 (256 aa).

The segment covering 1-18 has biased composition (basic residues); sequence MAVGKNKRLSKGKKGLKK. Residues 1–22 form a disordered region; sequence MAVGKNKRLSKGKKGLKKKTQD. A2 is subject to N-acetylalanine; partial.

The protein belongs to the eukaryotic ribosomal protein eS1 family. In terms of assembly, component of the small ribosomal subunit (SSU). Mature N.crassa ribosomes consist of a small (40S) and a large (60S) subunit. The 40S small subunit contains 1 molecule of ribosomal RNA (18S rRNA) and at least 32 different proteins. The large 60S subunit contains 3 rRNA molecules (26S, 5.8S and 5S rRNA) and at least 42 different proteins.

Its subcellular location is the cytoplasm. Its function is as follows. Component of the ribosome, a large ribonucleoprotein complex responsible for the synthesis of proteins in the cell. The small ribosomal subunit (SSU) binds messenger RNAs (mRNAs) and translates the encoded message by selecting cognate aminoacyl-transfer RNA (tRNA) molecules. The large subunit (LSU) contains the ribosomal catalytic site termed the peptidyl transferase center (PTC), which catalyzes the formation of peptide bonds, thereby polymerizing the amino acids delivered by tRNAs into a polypeptide chain. The nascent polypeptides leave the ribosome through a tunnel in the LSU and interact with protein factors that function in enzymatic processing, targeting, and the membrane insertion of nascent chains at the exit of the ribosomal tunnel. The sequence is that of Small ribosomal subunit protein eS1 (rps1) from Neurospora crassa (strain ATCC 24698 / 74-OR23-1A / CBS 708.71 / DSM 1257 / FGSC 987).